The sequence spans 425 residues: Protein upregulated in glial subsets pugs-5 (425 aa).

Basic and acidic residues predominate over residues 355 to 373 (NNNDVEKSTQIEKKPEKQG). A disordered region spans residues 355–407 (NNNDVEKSTQIEKKPEKQGPEIQEEVVEMETVKDEQPPKTSAVRFKENSPRLM).

This Caenorhabditis elegans protein is Protein upregulated in glial subsets pugs-5.